We begin with the raw amino-acid sequence, 724 residues long: Eukaryotic elongation factor 2 kinase (724 aa).

A2 carries the N-acetylalanine modification. S27 is modified (phosphoserine). Phosphoserine; by autocatalysis is present on S61. 3 positions are modified to phosphoserine: S70, S73, and S77. Residues F80 to H93 form a calmodulin-binding region. The Alpha-type protein kinase domain maps to R115–F325. S242 carries the post-translational modification Phosphoserine. G295–V301 provides a ligand contact to ATP. A phosphothreonine; by autocatalysis mark is found at T347 and T352. The segment at E353 to S476 is disordered. A Phosphoserine; by MAPK13 and CDK1 modification is found at S358. Over residues S358–S376 the composition is skewed to low complexity. Phosphoserine; by autocatalysis, RPS6KA1 and RPS6KB1 is present on S365. Positions S385–S403 are enriched in polar residues. Position 391 is a phosphoserine (S391). S397 bears the Phosphoserine; by AMPK mark. Basic and acidic residues-rich tracts occupy residues G421 to E435 and S444 to S469. S434, S444, and S469 each carry phosphoserine. S473 is subject to Phosphoserine; by autocatalysis. A Phosphoserine modification is found at S476. Phosphoserine; by PKA is present on S499.

This sequence belongs to the protein kinase superfamily. Alpha-type protein kinase family. In terms of assembly, monomer or homodimer. Interacts with Calmodulin/CALM1; this interaction is strictly required for phosphorylation activity. In terms of processing, autophosphorylated at multiple residues, Thr-347 being the major site. Phosphorylated by AMP-activated protein kinase AMPK at Ser-397 leading to EEF2K activation and protein synthesis inhibition. Phosphorylated by TRPM7 at Ser-77 resulting in improved protein stability, higher EE2F phosphorylated and subsequently reduced rate of protein synthesis. Phosphorylation by other kinases such as CDK1 and MAPK13 at Ser-358 or RPS6KA1 and RPS6KB1 at Ser-365 instead decrease EEF2K activity and promote protein synthesis. In terms of tissue distribution, ubiquitously expressed. Particularly abundant in skeletal muscle and heart.

It catalyses the reaction [translation elongation factor 2] + ATP = [translation elongation factor 2]-phosphate + ADP + H(+). Undergoes calcium/calmodulin-dependent intramolecular autophosphorylation, and this results in it becoming partially calcium/calmodulin-independent. Its function is as follows. Threonine kinase that regulates protein synthesis by controlling the rate of peptide chain elongation. Upon activation by a variety of upstream kinases including AMPK or TRPM7, phosphorylates the elongation factor EEF2 at a single site, renders it unable to bind ribosomes and thus inactive. In turn, the rate of protein synthesis is reduced. The polypeptide is Eukaryotic elongation factor 2 kinase (Eef2k) (Mus musculus (Mouse)).